Here is a 248-residue protein sequence, read N- to C-terminus: Probable transcriptional regulatory protein LAR_0538 (248 aa).

A disordered region spans residues 1-22 (MSGHSKWHNIQGRKNAQDAKRG).

The protein belongs to the TACO1 family.

Its subcellular location is the cytoplasm. This chain is Probable transcriptional regulatory protein LAR_0538, found in Limosilactobacillus reuteri subsp. reuteri (strain JCM 1112) (Lactobacillus reuteri).